The following is a 145-amino-acid chain: UPF0201 protein Saci_1285 (145 aa).

Belongs to the UPF0201 family.

In Sulfolobus acidocaldarius (strain ATCC 33909 / DSM 639 / JCM 8929 / NBRC 15157 / NCIMB 11770), this protein is UPF0201 protein Saci_1285.